A 120-amino-acid polypeptide reads, in one-letter code: Small ribosomal subunit protein eS24 (120 aa).

The disordered stretch occupies residues 101-120; that stretch reads RDAGTKQKKGGSKGGQGAKG.

Belongs to the eukaryotic ribosomal protein eS24 family.

The chain is Small ribosomal subunit protein eS24 from Saccharolobus islandicus (strain Y.N.15.51 / Yellowstone #2) (Sulfolobus islandicus).